The sequence spans 1742 residues: Complement C4 (1742 aa).

The signal sequence occupies residues 1–19; sequence MRLLWGLLWAFGLFASSLQ. N-linked (GlcNAc...) asparagine glycosylation occurs at Asn60. A disulfide bridge links Cys68 with Cys97. The N-linked (GlcNAc...) asparagine glycan is linked to Asn226. Cys634 and Cys668 are disulfide-bonded. Positions 675–678 are excised as a propeptide; that stretch reads RKKR. 3 disulfide bridges follow: Cys701/Cys727, Cys702/Cys734, and Cys715/Cys735. One can recognise an Anaphylatoxin-like domain in the interval 701 to 735; the sequence is CCQDGLTRLPMVRSCEQRAARVLQPACREPFLSCC. Asn861 carries N-linked (GlcNAc...) asparagine glycosylation. A cross-link (isoglutamyl cysteine thioester (Cys-Gln)) is located at residues 1007-1010; that stretch reads CGEQ. N-linked (GlcNAc...) asparagine glycans are attached at residues Asn1325 and Asn1388. Sulfotyrosine is present on residues Tyr1414, Tyr1418, and Tyr1420. Positions 1445–1451 are excised as a propeptide; sequence RRNRRRR. 5 disulfides stabilise this stretch: Cys1469–Cys1533, Cys1581–Cys1586, Cys1593–Cys1671, Cys1616–Cys1740, and Cys1716–Cys1725. Positions 1593–1740 constitute an NTR domain; sequence CPRQRRALER…FIQEYSTLGC (148 aa).

As to quaternary structure, in absence of complement activation, circulates in blood as a disulfide-linked trimer of an alpha, beta and gamma chain. In terms of assembly, complement C4b is composed of complement C4b-A, complement C4 beta and complement C4 gamma chains that are associated via disulfide bonds. Non-enzymatic component of the C3 convertase, also named C4bC2b, composed of the serine protease complement C2b (C2), as well as complement C4b. Non-enzymatic component of the C5 convertase, also named C4bC2bC3b, composed of the serine protease complement C2b (C2), complement C3b, as well as complement C4b. In terms of processing, prior to secretion, the single-chain precursor is enzymatically cleaved by plasminogen (PLG) to yield non-identical chains alpha, beta and gamma. During activation of the complement systems, the alpha chain is cleaved into C4a and C4b by different proteases depending on the complement pathway: C4b stays linked to the beta and gamma chains, while C4a is released in the plasma. The alpha chain is cleaved by C1S to generate C4a and C4b following activation by the classical complement system. The alpha chain is cleaved to generate C4a and C4b by MASP2 following activation by the lectin complement system. The alpha chain is cleaved by GZMK to generate C4a and C4b following activation by the GZMK complement system. Further degradation of C4b by C1 into the inactive fragments C4c and C4d blocks the generation of C3 convertase. The proteolytic cleavages often are incomplete so that many structural forms can be found in plasma. Upon activation, the internal thioester bond reacts with carbohydrate antigens on the target surface to form amide or ester bonds, leading to covalent association with the surface of pathogens. Post-translationally, complement C4b interacts with complement C3b via a thioester linkage. In terms of processing, N- and O-glycosylated. O-glycosylated with a core 1 or possibly core 8 glycan.

It localises to the secreted. It is found in the cell surface. Functionally, precursor of non-enzymatic components of the classical, lectin and GZMK complement pathways, which consist in a cascade of proteins that leads to phagocytosis and breakdown of pathogens and signaling that strengthens the adaptive immune system. In terms of biological role, non-enzymatic component of C3 and C5 convertases. Generated following cleavage by complement proteases (C1S, MASP2 or GZMK, depending on the complement pathway), it covalently attaches to the surface of pathogens, where it acts as an opsonin that marks the surface of antigens for removal. It then recruits the serine protease complement C2b to form the C3 and C5 convertases, which cleave and activate C3 and C5, respectively, the next components of the complement pathways. Complement C4b-A isotype is responsible for effective binding to form amide bonds with immune aggregates or protein antigens, while complement C4b-B isotype catalyzes the transacylation of the thioester carbonyl group to form ester bonds with carbohydrate antigens. Putative humoral mediator released following cleavage by complement proteases (C1S, MASP2 or GZMK, depending on the complement pathway). While it is strongly similar to anaphylatoxins, its role is unclear. Was reported to act as a mediator of local inflammatory process; however these effects were probably due to contamination with C3a and/C5a anaphylatoxins in biological assays. The protein is Complement C4 of Cavia porcellus (Guinea pig).